The primary structure comprises 260 residues: Type III pantothenate kinase (260 aa).

6-13 (DAGNTRTK) contributes to the ATP binding site. Residues tyrosine 88 and 95-98 (GVDR) contribute to the substrate site. The Proton acceptor role is filled by aspartate 97. Position 121 (serine 121) interacts with ATP. Position 184 (threonine 184) interacts with substrate.

It belongs to the type III pantothenate kinase family. In terms of assembly, homodimer. NH4(+) serves as cofactor. The cofactor is K(+).

It localises to the cytoplasm. The enzyme catalyses (R)-pantothenate + ATP = (R)-4'-phosphopantothenate + ADP + H(+). It functions in the pathway cofactor biosynthesis; coenzyme A biosynthesis; CoA from (R)-pantothenate: step 1/5. Functionally, catalyzes the phosphorylation of pantothenate (Pan), the first step in CoA biosynthesis. The polypeptide is Type III pantothenate kinase (Saccharophagus degradans (strain 2-40 / ATCC 43961 / DSM 17024)).